The chain runs to 446 residues: 4-aminobutyrate aminotransferase (446 aa).

Lys291 carries the N6-(pyridoxal phosphate)lysine modification.

The protein belongs to the class-III pyridoxal-phosphate-dependent aminotransferase family. Pyridoxal 5'-phosphate serves as cofactor.

It carries out the reaction 4-aminobutanoate + 2-oxoglutarate = succinate semialdehyde + L-glutamate. The catalysed reaction is (S)-3-amino-2-methylpropanoate + 2-oxoglutarate = 2-methyl-3-oxopropanoate + L-glutamate. It participates in amino-acid degradation; 4-aminobutanoate degradation. This Mycobacterium leprae (strain TN) protein is 4-aminobutyrate aminotransferase (gabT).